The sequence spans 658 residues: Integrator complex subunit 9 (658 aa).

Lys58 participates in a covalent cross-link: Glycyl lysine isopeptide (Lys-Gly) (interchain with G-Cter in SUMO2). The disordered stretch occupies residues 548–573; it reads DNKHVLQPPPRPTQPTGGKKRKRASD. The Nuclear localization signal signature appears at 566–570; it reads KKRKR.

This sequence belongs to the metallo-beta-lactamase superfamily. RNA-metabolizing metallo-beta-lactamase-like family. INTS9 subfamily. Component of the Integrator complex, composed of core subunits INTS1, INTS2, INTS3, INTS4, INTS5, INTS6, INTS7, INTS8, INTS9/RC74, INTS10, INTS11/CPSF3L, INTS12, INTS13, INTS14 and INTS15. The core complex associates with protein phosphatase 2A subunits PPP2CA and PPP2R1A, to form the Integrator-PP2A (INTAC) complex. INTS9 is part of the RNA endonuclease subcomplex, composed of INTS4, INTS9, INTS11 and inositol hexakisphosphate (InsP6). Interacts with WDR73; interaction is required for the assembly of the RNA endonuclease subcomplex in the cytoplasm. Interacts with BRAT1; interaction is required for the assembly of the RNA endonuclease subcomplex. Interacts with ESRRB, ESRRB is not a core component of the Integrator complex and this association is a bridge for the interaction with the multiprotein complex Integrator; attracts the transcriptional machinery.

It localises to the nucleus. It is found in the cytoplasm. In terms of biological role, component of the integrator complex, a multiprotein complex that terminates RNA polymerase II (Pol II) transcription in the promoter-proximal region of genes. The integrator complex provides a quality checkpoint during transcription elongation by driving premature transcription termination of transcripts that are unfavorably configured for transcriptional elongation: the complex terminates transcription by (1) catalyzing dephosphorylation of the C-terminal domain (CTD) of Pol II subunit POLR2A/RPB1 and SUPT5H/SPT5, (2) degrading the exiting nascent RNA transcript via endonuclease activity and (3) promoting the release of Pol II from bound DNA. The integrator complex is also involved in terminating the synthesis of non-coding Pol II transcripts, such as enhancer RNAs (eRNAs), small nuclear RNAs (snRNAs), telomerase RNAs and long non-coding RNAs (lncRNAs). Mediates recruitment of cytoplasmic dynein to the nuclear envelope, probably as component of the integrator complex. In Bos taurus (Bovine), this protein is Integrator complex subunit 9 (INTS9).